Here is a 592-residue protein sequence, read N- to C-terminus: Malic enzyme, hydrogenosomal (592 aa).

Residues 1–27 (MLAPIQTIARPVSSILPATGALAAKRT) constitute a hydrogenosome transit peptide. The active-site Proton donor is the Tyr134. 182–205 (VTDGSRILGLGDLGAGGMQIPIGK) provides a ligand contact to NADP(+). Arg187 provides a ligand contact to NAD(+). Lys205 functions as the Proton acceptor in the catalytic mechanism. Glu276, Asp277, and Asp300 together coordinate a divalent metal cation. Asp300 provides a ligand contact to NAD(+). NADP(+) is bound at residue 335–352 (GAGSSGVGVCETIVDCIV). Asn443 is an NAD(+) binding site.

The protein belongs to the malic enzymes family. Mg(2+) serves as cofactor. It depends on Mn(2+) as a cofactor.

It localises to the hydrogenosome. The catalysed reaction is (S)-malate + NADP(+) = pyruvate + CO2 + NADPH. It carries out the reaction oxaloacetate + H(+) = pyruvate + CO2. The polypeptide is Malic enzyme, hydrogenosomal (Neocallimastix frontalis (Rumen fungus)).